A 457-amino-acid chain; its full sequence is ATP synthase subunit beta (457 aa).

Gly150–Thr157 serves as a coordination point for ATP.

This sequence belongs to the ATPase alpha/beta chains family. As to quaternary structure, F-type ATPases have 2 components, CF(1) - the catalytic core - and CF(0) - the membrane proton channel. CF(1) has five subunits: alpha(3), beta(3), gamma(1), delta(1), epsilon(1). CF(0) has three main subunits: a(1), b(2) and c(9-12). The alpha and beta chains form an alternating ring which encloses part of the gamma chain. CF(1) is attached to CF(0) by a central stalk formed by the gamma and epsilon chains, while a peripheral stalk is formed by the delta and b chains.

Its subcellular location is the cell membrane. It carries out the reaction ATP + H2O + 4 H(+)(in) = ADP + phosphate + 5 H(+)(out). Functionally, produces ATP from ADP in the presence of a proton gradient across the membrane. The catalytic sites are hosted primarily by the beta subunits. The sequence is that of ATP synthase subunit beta from Baumannia cicadellinicola subsp. Homalodisca coagulata.